Here is a 255-residue protein sequence, read N- to C-terminus: Tachylectin-2 (255 aa).

Positions 1–19 (MKFLLVVLGFIGFLKDGIT) are cleaved as a signal peptide. 5 WD repeats span residues 20–67 (VGGE…FLFL), 68–114 (SPGG…FLFF), 115–161 (DPNG…FLFF), 162–208 (HPNG…FLFF), and 209–255 (SSVG…FLFF).

As to quaternary structure, monomer.

The protein resides in the secreted. The protein localises to the cytoplasmic granule. In terms of biological role, lectin that binds specifically to N-acetylglucosamine and N-acetylgalactosamine. Is part of the innate immunity host defense system of the horseshoe crab. The chain is Tachylectin-2 from Tachypleus tridentatus (Japanese horseshoe crab).